The sequence spans 512 residues: Cytochrome P450 76C1 (512 aa).

A helical transmembrane segment spans residues 3–23; it reads IISGQALLLLFCFILSCFLIF. Heme is bound at residue Cys-450.

It belongs to the cytochrome P450 family. Heme is required as a cofactor.

Its subcellular location is the membrane. This Arabidopsis thaliana (Mouse-ear cress) protein is Cytochrome P450 76C1 (CYP76C1).